Here is a 282-residue protein sequence, read N- to C-terminus: DegV domain-containing protein SpyM3_0586 (282 aa).

The 278-residue stretch at 3–280 (LAVITDSTAT…EGAIAFGVTP (278 aa)) folds into the DegV domain. Hexadecanoate-binding residues include threonine 61 and serine 94.

In terms of biological role, may bind long-chain fatty acids, such as palmitate, and may play a role in lipid transport or fatty acid metabolism. The sequence is that of DegV domain-containing protein SpyM3_0586 from Streptococcus pyogenes serotype M3 (strain ATCC BAA-595 / MGAS315).